The following is a 269-amino-acid chain: tRNA uridine(34) hydroxylase (269 aa).

A Rhodanese domain is found at 121-214 (SQPDVLVIDT…YLERTHNKNG (94 aa)). The Cysteine persulfide intermediate role is filled by C174.

The protein belongs to the TrhO family.

The enzyme catalyses uridine(34) in tRNA + AH2 + O2 = 5-hydroxyuridine(34) in tRNA + A + H2O. Its function is as follows. Catalyzes oxygen-dependent 5-hydroxyuridine (ho5U) modification at position 34 in tRNAs. The protein is tRNA uridine(34) hydroxylase of Wolbachia sp. subsp. Brugia malayi (strain TRS).